Here is a 395-residue protein sequence, read N- to C-terminus: uncharacterized protein (395 aa).

Residues 286–306 (SSNKSSESTMTSPLDSASSLH) are compositionally biased toward low complexity. A disordered region spans residues 286-395 (SSNKSSESTM…RNDDSGLESV (110 aa)). Residues 350–362 (RPPPPSVHPPIFP) show a composition bias toward pro residues. Polar residues predominate over residues 364–385 (QTQLFHPPTYSTQRHVTSPNSS).

This is an uncharacterized protein from Caenorhabditis elegans.